Consider the following 295-residue polypeptide: Beta-lactamase-like protein 2 homolog (295 aa).

Positions 79, 81, 83, 84, 141, 160, and 195 each coordinate Zn(2+).

The protein belongs to the metallo-beta-lactamase superfamily. Glyoxalase II family.

The chain is Beta-lactamase-like protein 2 homolog from Caenorhabditis elegans.